The chain runs to 149 residues: Oligosaccharyltransferase complex subunit ostc-A (149 aa).

At 1 to 32 the chain is on the cytoplasmic side; the sequence is MESLYRVPFTVLECPNLKLKKPSWLHMPSAMT. A helical transmembrane segment spans residues 33 to 53; sequence VYAMVVVSYFLITGGIIYDVI. The Extracellular segment spans residues 54-83; that stretch reads VEPPSVGSMTDEHGHQRPVAFLAYRVNGQY. A helical transmembrane segment spans residues 84–104; that stretch reads IMEGLASSFLFTMGGLGFIIL. The Cytoplasmic segment spans residues 105–117; it reads DRSNTPNIPKLNR. A helical membrane pass occupies residues 118–138; it reads FLLLFIGFVCVLLSFFMARVF. At 139 to 149 the chain is on the extracellular side; the sequence is MRMKLPGYLMG.

This sequence belongs to the OSTC family. Specific component of the STT3A-containing form of the oligosaccharyltransferase (OST) complex.

The protein localises to the membrane. Its pathway is protein modification; protein glycosylation. In terms of biological role, specific component of the STT3A-containing form of the oligosaccharyl transferase (OST) complex that catalyzes the initial transfer of a defined glycan (Glc(3)Man(9)GlcNAc(2) in eukaryotes) from the lipid carrier dolichol-pyrophosphate to an asparagine residue within an Asn-X-Ser/Thr consensus motif in nascent polypeptide chains, the first step in protein N-glycosylation. N-glycosylation occurs cotranslationally and the complex associates with the Sec61 complex at the channel-forming translocon complex that mediates protein translocation across the endoplasmic reticulum (ER). All subunits are required for a maximal enzyme activity. The polypeptide is Oligosaccharyltransferase complex subunit ostc-A (Xenopus laevis (African clawed frog)).